A 248-amino-acid chain; its full sequence is Mitochondrial import inner membrane translocase subunit Tim21 (248 aa).

A mitochondrion-targeting transit peptide spans 1–18; the sequence is MICTFLRAVQYTEKLHRS. Residues 67–98 are disordered; sequence TQGPSPRKAKEDGSKQVSVHRSQRGGTAVPTS. The helical transmembrane segment at 108–128 threads the bilayer; the sequence is FTYLIVVLFGISITGGLFYTI.

Belongs to the TIM21 family. As to quaternary structure, component of the TIM23 complex. Component of the MITRAC (mitochondrial translation regulation assembly intermediate of cytochrome c oxidase complex) complex, the core components of this complex being COA3/MITRAC12 and COX14. Interacts with COA3 and MT-CO1/COX1.

Its subcellular location is the mitochondrion membrane. In terms of biological role, participates in the translocation of transit peptide-containing proteins across the mitochondrial inner membrane. Also required for assembly of mitochondrial respiratory chain complex I and complex IV as component of the MITRAC (mitochondrial translation regulation assembly intermediate of cytochrome c oxidase complex) complex. Probably shuttles between the presequence translocase and respiratory-chain assembly intermediates in a process that promotes incorporation of early nuclear-encoded subunits into these complexes. The polypeptide is Mitochondrial import inner membrane translocase subunit Tim21 (TIMM21) (Homo sapiens (Human)).